The chain runs to 208 residues: dITP/XTP pyrophosphatase (208 aa).

16–21 contributes to the substrate binding site; that stretch reads SNNKGK. The active-site Proton acceptor is the Asp79. Asp79 is a binding site for Mg(2+). Substrate contacts are provided by residues Ser80, 166–169, Lys189, and 194–195; these read FGYD and HR.

Belongs to the HAM1 NTPase family. In terms of assembly, homodimer. Requires Mg(2+) as cofactor.

The catalysed reaction is XTP + H2O = XMP + diphosphate + H(+). The enzyme catalyses dITP + H2O = dIMP + diphosphate + H(+). It catalyses the reaction ITP + H2O = IMP + diphosphate + H(+). In terms of biological role, pyrophosphatase that catalyzes the hydrolysis of nucleoside triphosphates to their monophosphate derivatives, with a high preference for the non-canonical purine nucleotides XTP (xanthosine triphosphate), dITP (deoxyinosine triphosphate) and ITP. Seems to function as a house-cleaning enzyme that removes non-canonical purine nucleotides from the nucleotide pool, thus preventing their incorporation into DNA/RNA and avoiding chromosomal lesions. This Acinetobacter baumannii (strain AB307-0294) protein is dITP/XTP pyrophosphatase.